Reading from the N-terminus, the 333-residue chain is MDLIESIWECAKQDKKRIILAEGEEKRNLIAADKIIKEGLAELVLVGDENKIKEKASELNLDISKAEIMDPETSLKTETYARDFYELRKHKGMTIEKSEKMVRDPLYFATMALKDGYVDGMVSGAVHTTGDLLRPGLQIIKTAPGVKIVSGFFVMIIPDCDYGEEGLLLFADCAVNPNPTSDELADIAITTAETARKLCNVEPKVAMLSFSTMGSAKGEMVDKVKNAVEITKKFRPDLAIDGELQLDAAIDSEVAALKAPSSNVAGNANVLVFPDLQTGNIGYKLVQRFAKAKAIGPICQGFAKPINDLSRGCSSEDIVNVVAITVVQAQRGI.

This sequence belongs to the phosphate acetyltransferase and butyryltransferase family.

The protein localises to the cytoplasm. The catalysed reaction is acetyl-CoA + phosphate = acetyl phosphate + CoA. Its pathway is metabolic intermediate biosynthesis; acetyl-CoA biosynthesis; acetyl-CoA from acetate: step 2/2. This is Phosphate acetyltransferase (pta) from Clostridium acetobutylicum (strain ATCC 824 / DSM 792 / JCM 1419 / IAM 19013 / LMG 5710 / NBRC 13948 / NRRL B-527 / VKM B-1787 / 2291 / W).